A 122-amino-acid chain; its full sequence is Transcription initiation factor IIA subunit 2 (122 aa).

2 positions are modified to phosphoserine: serine 95 and serine 102.

Belongs to the TFIIA subunit 2 family. As to quaternary structure, TFIIA is a heterodimer composed of the large TOA1 and a small TOA2 subunits. Interacts with TBP. Interacts with TAF11. Interacts with KAP122.

It localises to the cytoplasm. The protein localises to the nucleus. Functionally, TFIIA is a component of the transcription machinery of RNA polymerase II and plays an important role in transcriptional activation. TFIIA in a complex with TBP mediates transcriptional activity. The polypeptide is Transcription initiation factor IIA subunit 2 (TOA2) (Saccharomyces cerevisiae (strain ATCC 204508 / S288c) (Baker's yeast)).